The chain runs to 453 residues: Transcription factor bHLH110 (453 aa).

Disordered regions lie at residues 1 to 37 (MDSA…YGAS) and 177 to 197 (SSLP…RGNF). 2 stretches are compositionally biased toward low complexity: residues 8–32 (QLQD…SDPS) and 177–192 (SSLP…SSQS). The bHLH domain maps to 322–371 (VESRSSCPPFKVRKEKLGDRIAALQQLVSPFGKTDTASVLMEAIGYIKFL). The disordered stretch occupies residues 386–411 (SRNRPGKASQLVSQSQEGDEEETRDL).

In terms of assembly, homodimer.

It localises to the nucleus. The chain is Transcription factor bHLH110 (BHLH110) from Arabidopsis thaliana (Mouse-ear cress).